Reading from the N-terminus, the 533-residue chain is D-3-phosphoglycerate dehydrogenase (533 aa).

At alanine 2 the chain carries N-acetylalanine. At serine 14 the chain carries Phosphoserine. N6-acetyllysine; alternate is present on lysine 21. Residue lysine 21 forms a Glycyl lysine isopeptide (Lys-Gly) (interchain with G-Cter in SUMO1); alternate linkage. Lysine 21 participates in a covalent cross-link: Glycyl lysine isopeptide (Lys-Gly) (interchain with G-Cter in SUMO2); alternate. Lysine 58 carries the N6-acetyllysine modification. Residues threonine 78, 155 to 156 (RI), aspartate 175, threonine 207, 234 to 236 (CAR), and aspartate 260 contribute to the NAD(+) site. At threonine 78 the chain carries Phosphothreonine. Residue arginine 236 is part of the active site. Glutamate 265 is a catalytic residue. Histidine 283 functions as the Proton donor in the catalytic mechanism. NAD(+) is bound at residue 283–286 (HLGA).

This sequence belongs to the D-isomer specific 2-hydroxyacid dehydrogenase family. In terms of assembly, homotetramer.

The catalysed reaction is (2R)-3-phosphoglycerate + NAD(+) = 3-phosphooxypyruvate + NADH + H(+). The enzyme catalyses (R)-2-hydroxyglutarate + NAD(+) = 2-oxoglutarate + NADH + H(+). It catalyses the reaction (S)-malate + NAD(+) = oxaloacetate + NADH + H(+). It functions in the pathway amino-acid biosynthesis; L-serine biosynthesis; L-serine from 3-phospho-D-glycerate: step 1/3. Functionally, catalyzes the reversible oxidation of 3-phospho-D-glycerate to 3-phosphonooxypyruvate, the first step of the phosphorylated L-serine biosynthesis pathway. Also catalyzes the reversible oxidation of 2-hydroxyglutarate to 2-oxoglutarate and the reversible oxidation of (S)-malate to oxaloacetate. This Pongo abelii (Sumatran orangutan) protein is D-3-phosphoglycerate dehydrogenase (PHGDH).